A 159-amino-acid polypeptide reads, in one-letter code: Ribosomal RNA large subunit methyltransferase H (159 aa).

S-adenosyl-L-methionine contacts are provided by residues glycine 108 and 127 to 132; that span reads FGKLTM.

It belongs to the RNA methyltransferase RlmH family. As to quaternary structure, homodimer.

The protein localises to the cytoplasm. The catalysed reaction is pseudouridine(1915) in 23S rRNA + S-adenosyl-L-methionine = N(3)-methylpseudouridine(1915) in 23S rRNA + S-adenosyl-L-homocysteine + H(+). Specifically methylates the pseudouridine at position 1915 (m3Psi1915) in 23S rRNA. This chain is Ribosomal RNA large subunit methyltransferase H, found in Lactobacillus helveticus (strain DPC 4571).